Reading from the N-terminus, the 617-residue chain is NADPH-dependent diflavin oxidoreductase 1 (617 aa).

Positions 3–147 (PMILYASETG…AFLPWLQQTL (145 aa)) constitute a Flavodoxin-like domain. Residues 9 to 14 (SETGNA), 56 to 59 (STHG), 94 to 103 (LGDSSYERFC), and Glu129 contribute to the FMN site. The FAD-binding FR-type domain maps to 226 to 465 (DDWVWATLKK…HIASPTLFLP (240 aa)). FAD is bound by residues 404–407 (RQFS) and 438–441 (GLCS). NADP(+) is bound by residues Thr479, 534–535 (SR), and 540–544 (RIYVQ). FAD is bound at residue Trp617.

Belongs to the NADPH-dependent diflavin oxidoreductase NDOR1 family. The protein in the N-terminal section; belongs to the flavodoxin family. This sequence in the C-terminal section; belongs to the flavoprotein pyridine nucleotide cytochrome reductase family. Interacts with DRE2; as part of the cytosolic iron-sulfur (Fe-S) protein assembly (CIA) machinery. FAD serves as cofactor. FMN is required as a cofactor.

The protein localises to the cytoplasm. It is found in the mitochondrion. The catalysed reaction is 2 oxidized [2Fe-2S]-[protein] + NADPH = 2 reduced [2Fe-2S]-[protein] + NADP(+) + H(+). In terms of biological role, NADPH-dependent reductase which is a central component of the cytosolic iron-sulfur (Fe-S) protein assembly (CIA) machinery. Transfers electrons from NADPH via its FAD and FMN prosthetic groups to the [2Fe-2S] cluster of DRE2, another key component of the CIA machinery. In turn, this reduced cluster provides electrons for assembly of cytosolic iron-sulfur cluster proteins. Positively controls H(2)O(2)-induced cell death. The chain is NADPH-dependent diflavin oxidoreductase 1 from Cryptococcus neoformans var. neoformans serotype D (strain B-3501A) (Filobasidiella neoformans).